The sequence spans 390 residues: Queuine tRNA-ribosyltransferase (390 aa).

Asp-92 serves as the catalytic Proton acceptor. Residues 92-96 (DSGGF), Asp-146, Gln-195, and Gly-222 contribute to the substrate site. The RNA binding stretch occupies residues 253 to 259 (GVGTPED). Asp-272 acts as the Nucleophile in catalysis. The tract at residues 277–281 (TRNAR) is RNA binding; important for wobble base 34 recognition. Zn(2+) is bound by residues Cys-310, Cys-312, Cys-315, and His-354.

The protein belongs to the queuine tRNA-ribosyltransferase family. In terms of assembly, homodimer. Within each dimer, one monomer is responsible for RNA recognition and catalysis, while the other monomer binds to the replacement base PreQ1. It depends on Zn(2+) as a cofactor.

The catalysed reaction is 7-aminomethyl-7-carbaguanine + guanosine(34) in tRNA = 7-aminomethyl-7-carbaguanosine(34) in tRNA + guanine. Its pathway is tRNA modification; tRNA-queuosine biosynthesis. Catalyzes the base-exchange of a guanine (G) residue with the queuine precursor 7-aminomethyl-7-deazaguanine (PreQ1) at position 34 (anticodon wobble position) in tRNAs with GU(N) anticodons (tRNA-Asp, -Asn, -His and -Tyr). Catalysis occurs through a double-displacement mechanism. The nucleophile active site attacks the C1' of nucleotide 34 to detach the guanine base from the RNA, forming a covalent enzyme-RNA intermediate. The proton acceptor active site deprotonates the incoming PreQ1, allowing a nucleophilic attack on the C1' of the ribose to form the product. After dissociation, two additional enzymatic reactions on the tRNA convert PreQ1 to queuine (Q), resulting in the hypermodified nucleoside queuosine (7-(((4,5-cis-dihydroxy-2-cyclopenten-1-yl)amino)methyl)-7-deazaguanosine). The protein is Queuine tRNA-ribosyltransferase of Acidovorax sp. (strain JS42).